A 79-amino-acid chain; its full sequence is ATP synthase subunit c (79 aa).

Transmembrane regions (helical) follow at residues 11 to 31 (IAVAVMIGLAAIGAAVGIGIL) and 59 to 79 (LVDAIPMIAVGLGLYMLFAVI).

The protein belongs to the ATPase C chain family. F-type ATPases have 2 components, F(1) - the catalytic core - and F(0) - the membrane proton channel. F(1) has five subunits: alpha(3), beta(3), gamma(1), delta(1), epsilon(1). F(0) has three main subunits: a(1), b(2) and c(10-14). The alpha and beta chains form an alternating ring which encloses part of the gamma chain. F(1) is attached to F(0) by a central stalk formed by the gamma and epsilon chains, while a peripheral stalk is formed by the delta and b chains.

It is found in the cell membrane. In terms of biological role, f(1)F(0) ATP synthase produces ATP from ADP in the presence of a proton or sodium gradient. F-type ATPases consist of two structural domains, F(1) containing the extramembraneous catalytic core and F(0) containing the membrane proton channel, linked together by a central stalk and a peripheral stalk. During catalysis, ATP synthesis in the catalytic domain of F(1) is coupled via a rotary mechanism of the central stalk subunits to proton translocation. Key component of the F(0) channel; it plays a direct role in translocation across the membrane. A homomeric c-ring of between 10-14 subunits forms the central stalk rotor element with the F(1) delta and epsilon subunits. The polypeptide is ATP synthase subunit c (Buchnera aphidicola subsp. Baizongia pistaciae (strain Bp)).